We begin with the raw amino-acid sequence, 409 residues long: 23S rRNA (uracil(747)-C(5))-methyltransferase (409 aa).

4 residues coordinate [4Fe-4S] cluster: Cys61, Cys67, Cys70, and Cys137. Residues Gln251, Tyr277, Glu298, and Asp339 each contribute to the S-adenosyl-L-methionine site. The Nucleophile role is filled by Cys365.

Belongs to the class I-like SAM-binding methyltransferase superfamily. RNA M5U methyltransferase family.

The enzyme catalyses uridine(747) in 23S rRNA + S-adenosyl-L-methionine = 5-methyluridine(747) in 23S rRNA + S-adenosyl-L-homocysteine + H(+). Its function is as follows. Catalyzes the formation of 5-methyl-uridine at position equivalent to 747 (m5U747) in 23S rRNA. The chain is 23S rRNA (uracil(747)-C(5))-methyltransferase from Pyrococcus furiosus (strain ATCC 43587 / DSM 3638 / JCM 8422 / Vc1).